The chain runs to 663 residues: Methionine--tRNA ligase (663 aa).

Positions 10–20 match the 'HIGH' region motif; it reads AYTNGPLHLGH. Zn(2+) is bound by residues Cys142, Cys145, Cys154, and Cys157. Residues 323–327 carry the 'KMSKS' region motif; it reads KMSTS. Thr326 lines the ATP pocket. Positions 563–663 constitute a tRNA-binding domain; that stretch reads YFGNIDLRVG…RDLPVGSKIH (101 aa).

This sequence belongs to the class-I aminoacyl-tRNA synthetase family. MetG type 1 subfamily. Homodimer. The cofactor is Zn(2+).

The protein localises to the cytoplasm. It catalyses the reaction tRNA(Met) + L-methionine + ATP = L-methionyl-tRNA(Met) + AMP + diphosphate. Is required not only for elongation of protein synthesis but also for the initiation of all mRNA translation through initiator tRNA(fMet) aminoacylation. The polypeptide is Methionine--tRNA ligase (Methanococcus maripaludis (strain C5 / ATCC BAA-1333)).